The primary structure comprises 381 residues: uncharacterized protein (381 aa).

Residues 1 to 16 form the signal peptide; that stretch reads MQTLLFYFFFINLIFA. Over 17 to 303 the chain is Lumenal; it reads HDLNVKTYKP…KILENSPCPN (287 aa). Cys118 and Cys149 are disulfide-bonded. Residues Asn133, Asn192, Asn225, Asn243, Asn246, and Asn287 are each glycosylated (N-linked (GlcNAc...) asparagine). Residues 304–324 form a helical membrane-spanning segment; sequence QPSIQPFGILMMLVSTIYGNF. The Cytoplasmic segment spans residues 325–359; that stretch reads KNLYNCIKRNTIGYIYNSIYDFWITEGMLFPMRNM. A helical transmembrane segment spans residues 360–380; it reads DIFKITAISIGLSIPVFLWLL. Residue Lys381 is a topological domain, lumenal.

The protein belongs to the calreticulin family.

It localises to the endoplasmic reticulum membrane. This is an uncharacterized protein from Schizosaccharomyces pombe (strain 972 / ATCC 24843) (Fission yeast).